A 154-amino-acid chain; its full sequence is uncharacterized protein (154 aa).

Residues 1-37 (MDNLKEKPLSYNINNNNLNNNNNNNNNNNNNNNNINN) are disordered. Over residues 12–37 (NINNNNLNNNNNNNNNNNNNNNNINN) the composition is skewed to low complexity. Asn82 carries N-linked (GlcNAc...) asparagine glycosylation. A helical membrane pass occupies residues 116–136 (IIITTIVVLLMIAVSLGLILA). A glycan (N-linked (GlcNAc...) asparagine) is linked at Asn149.

The protein resides in the membrane. This is an uncharacterized protein from Dictyostelium discoideum (Social amoeba).